Here is an 82-residue protein sequence, read N- to C-terminus: Small ribosomal subunit protein uS17 (82 aa).

The protein belongs to the universal ribosomal protein uS17 family. In terms of assembly, part of the 30S ribosomal subunit.

In terms of biological role, one of the primary rRNA binding proteins, it binds specifically to the 5'-end of 16S ribosomal RNA. This chain is Small ribosomal subunit protein uS17, found in Sulfurimonas denitrificans (strain ATCC 33889 / DSM 1251) (Thiomicrospira denitrificans (strain ATCC 33889 / DSM 1251)).